Reading from the N-terminus, the 136-residue chain is UPF0299 membrane protein PM0880 (136 aa).

4 helical membrane-spanning segments follow: residues 5 to 25, 29 to 49, 67 to 87, and 92 to 112; these read IVDL…GEWI, LNIG…GLTF, YMAL…DVLF, and VLLL…GLLS.

It belongs to the UPF0299 family.

The protein localises to the cell inner membrane. This Pasteurella multocida (strain Pm70) protein is UPF0299 membrane protein PM0880.